A 56-amino-acid polypeptide reads, in one-letter code: Large ribosomal subunit protein bL32c (56 aa).

The protein belongs to the bacterial ribosomal protein bL32 family.

The protein resides in the plastid. It localises to the chloroplast. This is Large ribosomal subunit protein bL32c from Tupiella akineta (Green alga).